Here is a 316-residue protein sequence, read N- to C-terminus: GTP cyclohydrolase FolE2 2 (316 aa).

The protein belongs to the GTP cyclohydrolase IV family.

It catalyses the reaction GTP + H2O = 7,8-dihydroneopterin 3'-triphosphate + formate + H(+). Its pathway is cofactor biosynthesis; 7,8-dihydroneopterin triphosphate biosynthesis; 7,8-dihydroneopterin triphosphate from GTP: step 1/1. Functionally, converts GTP to 7,8-dihydroneopterin triphosphate. The sequence is that of GTP cyclohydrolase FolE2 2 from Burkholderia orbicola (strain MC0-3).